A 193-amino-acid polypeptide reads, in one-letter code: Adenine phosphoribosyltransferase (193 aa).

This sequence belongs to the purine/pyrimidine phosphoribosyltransferase family. In terms of assembly, homodimer.

The protein localises to the cytoplasm. It carries out the reaction AMP + diphosphate = 5-phospho-alpha-D-ribose 1-diphosphate + adenine. The protein operates within purine metabolism; AMP biosynthesis via salvage pathway; AMP from adenine: step 1/1. In terms of biological role, catalyzes a salvage reaction resulting in the formation of AMP, that is energically less costly than de novo synthesis. In Bifidobacterium longum (strain NCC 2705), this protein is Adenine phosphoribosyltransferase.